Here is a 255-residue protein sequence, read N- to C-terminus: Hydroxyacylglutathione hydrolase (255 aa).

The Zn(2+) site is built by His55, His57, Asp59, His60, His112, Asp129, and His167.

It belongs to the metallo-beta-lactamase superfamily. Glyoxalase II family. As to quaternary structure, monomer. Zn(2+) serves as cofactor.

It carries out the reaction an S-(2-hydroxyacyl)glutathione + H2O = a 2-hydroxy carboxylate + glutathione + H(+). It participates in secondary metabolite metabolism; methylglyoxal degradation; (R)-lactate from methylglyoxal: step 2/2. Its function is as follows. Thiolesterase that catalyzes the hydrolysis of S-D-lactoyl-glutathione to form glutathione and D-lactic acid. The protein is Hydroxyacylglutathione hydrolase of Halorhodospira halophila (strain DSM 244 / SL1) (Ectothiorhodospira halophila (strain DSM 244 / SL1)).